The primary structure comprises 417 residues: GTP-binding protein YPT11 (417 aa).

The interval 1 to 34 is disordered; it reads MSQRKRYSLNVVTSPSIPSPTPSAPIRTNESNWE. GTP is bound by residues 97-104, 228-232, and 292-295; these read GDANVGKT, DTAGQ, and NKID. S-geranylgeranyl cysteine attachment occurs at residues C415 and C416.

It belongs to the small GTPase superfamily. Rab family. In terms of assembly, interacts with MYO2 (via C-terminal tail domain). Interacts with YIF1, YIP3, YIP4 and YIP5.

The protein resides in the endoplasmic reticulum membrane. Its subcellular location is the bud tip. It is found in the bud neck. Its function is as follows. Involved in the positive control of both endoplasmic reticulum (ER) and mitochondrion inheritance during cell divison. Required for the MYO2-dependent retention of newly inherited mitochondria at the bud tip in developing daughter cells. In Saccharomyces cerevisiae (strain RM11-1a) (Baker's yeast), this protein is GTP-binding protein YPT11 (YPT11).